A 1025-amino-acid polypeptide reads, in one-letter code: Multidrug resistance protein MdtC (1025 aa).

The next 12 helical transmembrane spans lie at 15-35, 333-353, 360-380, 387-407, 431-451, 469-489, 528-548, 851-871, 875-895, 897-917, 953-973, and 984-1004; these read ILISLAITLCGILGFRLLPVA, EVEQTLVISVALVILVVFLFL, LIPAVAVPVSLIGTFAAMYLC, LSLMALTIATGFVVDDAIVVL, VGFTVLSMSLSLVAVFLPLLL, VAIGISLAVSLTLTPMMCGWL, LTGLVVLGTIALSVWLYISIP, AQVILILAAIATVYIVLGVLY, VHPLTILSTLPSAGVGALLAL, IFDAPFSLIALIGIMLLIGIV, PIMMTTLAALFGALPLVLSGG, and ITIVGGLVMSQLLTLYTTPVV.

The protein belongs to the resistance-nodulation-cell division (RND) (TC 2.A.6) family. MdtC subfamily. Part of a tripartite efflux system composed of MdtA, MdtB and MdtC. MdtC forms a heteromultimer with MdtB.

It is found in the cell inner membrane. The protein is Multidrug resistance protein MdtC of Klebsiella pneumoniae subsp. pneumoniae (strain ATCC 700721 / MGH 78578).